A 291-amino-acid polypeptide reads, in one-letter code: Kidney mitochondrial carrier protein 1 (291 aa).

S2 carries the N-acetylserine modification. Solcar repeat units follow at residues 7–96 (KPFV…LKRL), 104–189 (ETLL…TKKH), and 198–289 (DTVS…LKKL). Transmembrane regions (helical) follow at residues 9 to 26 (FVYG…TFPI), 71 to 89 (GIAP…KIGT), 106 to 124 (LLIN…SAIA), 164 to 183 (GVSL…LPVY), 204 to 224 (FLSS…VDVV), and 264 to 283 (GFWP…FLTY).

It belongs to the mitochondrial carrier (TC 2.A.29) family. In terms of assembly, interacts with VDAC1.

The protein localises to the mitochondrion inner membrane. The enzyme catalyses sulfite(in) + sulfate(out) = sulfite(out) + sulfate(in). The catalysed reaction is thiosulfate(in) + sulfate(out) = thiosulfate(out) + sulfate(in). It carries out the reaction sulfate(out) + phosphate(in) = sulfate(in) + phosphate(out). It catalyses the reaction oxalate(in) + sulfate(out) = oxalate(out) + sulfate(in). The enzyme catalyses malonate(in) + sulfate(out) = malonate(out) + sulfate(in). The catalysed reaction is maleate(in) + sulfate(out) = maleate(out) + sulfate(in). It carries out the reaction (S)-malate(in) + sulfate(out) = (S)-malate(out) + sulfate(in). It catalyses the reaction (3S)-citramalate(in) + sulfate(out) = (3S)-citramalate(out) + sulfate(in). The enzyme catalyses (3R)-citramalate(in) + sulfate(out) = (3R)-citramalate(out) + sulfate(in). The catalysed reaction is sulfate(out) + succinate(in) = sulfate(in) + succinate(out). It carries out the reaction (S,S)-tartrate(in) + sulfate(out) = (S,S)-tartrate(out) + sulfate(in). It catalyses the reaction (2R,3R)-tartrate(in) + sulfate(out) = (2R,3R)-tartrate(out) + sulfate(in). The enzyme catalyses D-aspartate(in) + sulfate(out) = D-aspartate(out) + sulfate(in). The catalysed reaction is L-aspartate(in) + sulfate(out) = L-aspartate(out) + sulfate(in). It carries out the reaction sulfate(in) = sulfate(out). It catalyses the reaction phosphate(in) = phosphate(out). The enzyme catalyses (S)-malate(out) = (S)-malate(in). In terms of biological role, antiporter that transports inorganic anions (sulfate, sulfite, thiosulfate and phosphate) and, to a lesser extent, a variety of dicarboxylates (e.g. malonate, malate and citramalate) and, even more so, aspartate. The sulfate/sulfate exchange is much higher than the phosphate/phosphate and malate/malate exchanges. The transport affinities is higher for sulfate and thiosulfate than for any other substrate. May catalyze the export of sulfite and thiosulfate (the hydrogen sulfide degradation products) from the mitochondria, thereby modulating the level of the hydrogen sulfide. Also may mediate a very low unidirectional transport of sulfate, phosphate and (S)-malate. This chain is Kidney mitochondrial carrier protein 1, found in Rattus norvegicus (Rat).